The primary structure comprises 559 residues: 2-succinyl-5-enolpyruvyl-6-hydroxy-3-cyclohexene-1-carboxylate synthase (559 aa).

This sequence belongs to the TPP enzyme family. MenD subfamily. In terms of assembly, homodimer. Mg(2+) serves as cofactor. The cofactor is Mn(2+). Thiamine diphosphate is required as a cofactor.

It catalyses the reaction isochorismate + 2-oxoglutarate + H(+) = 5-enolpyruvoyl-6-hydroxy-2-succinyl-cyclohex-3-ene-1-carboxylate + CO2. The protein operates within quinol/quinone metabolism; 1,4-dihydroxy-2-naphthoate biosynthesis; 1,4-dihydroxy-2-naphthoate from chorismate: step 2/7. It functions in the pathway quinol/quinone metabolism; menaquinone biosynthesis. In terms of biological role, catalyzes the thiamine diphosphate-dependent decarboxylation of 2-oxoglutarate and the subsequent addition of the resulting succinic semialdehyde-thiamine pyrophosphate anion to isochorismate to yield 2-succinyl-5-enolpyruvyl-6-hydroxy-3-cyclohexene-1-carboxylate (SEPHCHC). In Edwardsiella ictaluri (strain 93-146), this protein is 2-succinyl-5-enolpyruvyl-6-hydroxy-3-cyclohexene-1-carboxylate synthase.